We begin with the raw amino-acid sequence, 448 residues long: Rhodopsin (448 aa).

Topologically, residues 2–33 (GRDLRDNETWWYNPSIVVHPHWREFDQVPDAV) are extracellular. Asn8 carries N-linked (GlcNAc...) asparagine glycosylation. Residues 34-58 (YYSLGIFIGICGIIGCGGNGIVIYL) traverse the membrane as a helical segment. At 59–70 (FTKTKSLQTPAN) the chain is on the cytoplasmic side. A helical membrane pass occupies residues 71 to 97 (MFIINLAFSDFTFSLVNGFPLMTISCF). The Extracellular segment spans residues 98–109 (LKKWIFGFAACK). Cys108 and Cys186 are disulfide-bonded. A helical transmembrane segment spans residues 110–131 (VYGFIGGIFGFMSIMTMAMISI). The Cytoplasmic portion of the chain corresponds to 132-151 (DRYNVIGRPMAASKKMSHRR). Residues 152 to 172 (AFIMIIFVWLWSVLWAIGPIF) traverse the membrane as a helical segment. Over 173 to 199 (GWGAYTLEGVLCNCSFDYISRDSTTRS) the chain is Extracellular. The helical transmembrane segment at 200 to 224 (NILCMFILGFFGPILIIFFCYFNIV) threads the bilayer. The Cytoplasmic portion of the chain corresponds to 225-261 (MSVSNHEKEMAAMAKRLNAKELRKAQAGANAEMRLAK). Residues 262–283 (ISIVIVSQFLLSWSPYAVVALL) form a helical membrane-spanning segment. Residues 284 to 293 (AQFGPLEWVT) lie on the Extracellular side of the membrane. A helical transmembrane segment spans residues 294–315 (PYAAQLPVMFAKASAIHNPMIY). Lys305 bears the N6-(retinylidene)lysine mark. The Cytoplasmic segment spans residues 316-448 (SVSHPKFREA…QGVDNQAYQA (133 aa)). Residues Cys336 and Cys337 are each lipidated (S-palmitoyl cysteine). Acidic residues predominate over residues 343–352 (ETEDDKDAET). Residues 343–448 (ETEDDKDAET…QGVDNQAYQA (106 aa)) form a disordered region. Low complexity predominate over residues 359–391 (SSDAAPSADAAQMKEMMAMMQKMQQQQAAYPPQ). Residues 392 to 437 (GYAPPPQGYPPQGYPPQGYPPQGYPPQGYPPPPQGAPPQGAPPAAP) are compositionally biased toward pro residues.

This sequence belongs to the G-protein coupled receptor 1 family. Opsin subfamily. Contains one covalently linked retinal chromophore. Upon light absorption, the covalently bound 11-cis-retinal is converted to all-trans-retinal. After hydrolysis of the Schiff base and release of the covalently bound all-trans-retinal, active rhodopsin is regenerated by binding of a fresh molecule of 11-cis-retinal. Retina, rhabdomere membrane of photoreceptor cells (at protein level).

The protein resides in the cell projection. The protein localises to the rhabdomere membrane. Photoreceptor required for image-forming vision at low light intensity. Light-induced isomerization of 11-cis to all-trans retinal triggers a conformational change that activates signaling via G-proteins. Signaling mediates the activation of phospholipase C. Subsequent receptor phosphorylation mediates displacement of the bound G-protein alpha subunit by arrestin and terminates signaling. The protein is Rhodopsin (RHO) of Todarodes pacificus (Japanese flying squid).